A 347-amino-acid chain; its full sequence is NADH-ubiquinone oxidoreductase chain 2 (347 aa).

Helical transmembrane passes span 5–22 (ILIT…IVLF), 26–45 (WFMI…PILM), 60–80 (FLTQ…NLLC), 96–116 (TMIT…FWVP), 122–142 (ISLS…LSIL), 153–173 (LLLM…LNQT), 178–198 (ILAY…VYNP), 200–220 (LAIL…MLFM), 237–257 (FPLM…LPPL), 274–294 (DMII…YFYT), and 325–345 (LLAP…MLAA).

The protein belongs to the complex I subunit 2 family. In terms of assembly, core subunit of respiratory chain NADH dehydrogenase (Complex I) which is composed of 45 different subunits. Interacts with TMEM242.

It is found in the mitochondrion inner membrane. The catalysed reaction is a ubiquinone + NADH + 5 H(+)(in) = a ubiquinol + NAD(+) + 4 H(+)(out). In terms of biological role, core subunit of the mitochondrial membrane respiratory chain NADH dehydrogenase (Complex I) which catalyzes electron transfer from NADH through the respiratory chain, using ubiquinone as an electron acceptor. Essential for the catalytic activity and assembly of complex I. This chain is NADH-ubiquinone oxidoreductase chain 2, found in Ailuropoda melanoleuca (Giant panda).